Consider the following 286-residue polypeptide: Bifunctional protein FolD 2 (286 aa).

Residues Gly-165–Gly-167, Thr-192, and Ile-233 each bind NADP(+).

The protein belongs to the tetrahydrofolate dehydrogenase/cyclohydrolase family. In terms of assembly, homodimer.

The enzyme catalyses (6R)-5,10-methylene-5,6,7,8-tetrahydrofolate + NADP(+) = (6R)-5,10-methenyltetrahydrofolate + NADPH. It catalyses the reaction (6R)-5,10-methenyltetrahydrofolate + H2O = (6R)-10-formyltetrahydrofolate + H(+). Its pathway is one-carbon metabolism; tetrahydrofolate interconversion. In terms of biological role, catalyzes the oxidation of 5,10-methylenetetrahydrofolate to 5,10-methenyltetrahydrofolate and then the hydrolysis of 5,10-methenyltetrahydrofolate to 10-formyltetrahydrofolate. This is Bifunctional protein FolD 2 from Salinispora arenicola (strain CNS-205).